The primary structure comprises 250 residues: 2,5-dichloro-2,5-cyclohexadiene-1,4-diol dehydrogenase LinX (250 aa).

7 residues coordinate NAD(+): D38, D64, V65, Y156, K160, T191, and T194. Catalysis depends on Y156, which acts as the Proton acceptor.

It belongs to the short-chain dehydrogenases/reductases (SDR) family.

It carries out the reaction 2,5-dichlorocyclohexa-2,5-dien-1,4-diol + NAD(+) = 2,5-dichlorohydroquinone + NADH + H(+). Functionally, catalyzes the degradation of 2,5-dichloro-2,5-cyclohexadiene-1,4-diol (2,5-DDOL) into 2,5-dichlorohydroquinone (2,5-DCHQ) in vitro. LinX appears not to be involved in gamma-hexachlorocyclohexane (gamma-HCH) degradation pathway, in contrast to LinC which has the same enzymatic activity. This Sphingobium indicum (strain DSM 16412 / CCM 7286 / MTCC 6364 / B90A) protein is 2,5-dichloro-2,5-cyclohexadiene-1,4-diol dehydrogenase LinX.